Consider the following 315-residue polypeptide: 4-hydroxy-3-methylbut-2-enyl diphosphate reductase (315 aa).

Cys-12 is a binding site for [4Fe-4S] cluster. His-43 and His-81 together coordinate (2E)-4-hydroxy-3-methylbut-2-enyl diphosphate. Dimethylallyl diphosphate is bound by residues His-43 and His-81. Isopentenyl diphosphate-binding residues include His-43 and His-81. Cys-103 lines the [4Fe-4S] cluster pocket. Residue His-131 participates in (2E)-4-hydroxy-3-methylbut-2-enyl diphosphate binding. His-131 is a binding site for dimethylallyl diphosphate. Position 131 (His-131) interacts with isopentenyl diphosphate. The Proton donor role is filled by Glu-133. Thr-172 serves as a coordination point for (2E)-4-hydroxy-3-methylbut-2-enyl diphosphate. Cys-200 contacts [4Fe-4S] cluster. (2E)-4-hydroxy-3-methylbut-2-enyl diphosphate contacts are provided by Ser-228, Asn-230, and Ser-273. Ser-228, Asn-230, and Ser-273 together coordinate dimethylallyl diphosphate. Residues Ser-228, Asn-230, and Ser-273 each coordinate isopentenyl diphosphate.

It belongs to the IspH family. [4Fe-4S] cluster serves as cofactor.

It catalyses the reaction isopentenyl diphosphate + 2 oxidized [2Fe-2S]-[ferredoxin] + H2O = (2E)-4-hydroxy-3-methylbut-2-enyl diphosphate + 2 reduced [2Fe-2S]-[ferredoxin] + 2 H(+). It carries out the reaction dimethylallyl diphosphate + 2 oxidized [2Fe-2S]-[ferredoxin] + H2O = (2E)-4-hydroxy-3-methylbut-2-enyl diphosphate + 2 reduced [2Fe-2S]-[ferredoxin] + 2 H(+). The protein operates within isoprenoid biosynthesis; dimethylallyl diphosphate biosynthesis; dimethylallyl diphosphate from (2E)-4-hydroxy-3-methylbutenyl diphosphate: step 1/1. It functions in the pathway isoprenoid biosynthesis; isopentenyl diphosphate biosynthesis via DXP pathway; isopentenyl diphosphate from 1-deoxy-D-xylulose 5-phosphate: step 6/6. Functionally, catalyzes the conversion of 1-hydroxy-2-methyl-2-(E)-butenyl 4-diphosphate (HMBPP) into a mixture of isopentenyl diphosphate (IPP) and dimethylallyl diphosphate (DMAPP). Acts in the terminal step of the DOXP/MEP pathway for isoprenoid precursor biosynthesis. This is 4-hydroxy-3-methylbut-2-enyl diphosphate reductase from Exiguobacterium sibiricum (strain DSM 17290 / CCUG 55495 / CIP 109462 / JCM 13490 / 255-15).